Reading from the N-terminus, the 482-residue chain is Long chain base biosynthesis protein 1c (482 aa).

Residues 33–53 traverse the membrane as a helical segment; the sequence is FGIHIDGHLVVEGLLIAAILF.

Belongs to the class-II pyridoxal-phosphate-dependent aminotransferase family. Heterodimer with LCB2. Component of the serine palmitoyltransferase (SPT) complex, composed of LCB1 and LCB2. Requires pyridoxal 5'-phosphate as cofactor.

The protein resides in the endoplasmic reticulum membrane. It catalyses the reaction L-serine + hexadecanoyl-CoA + H(+) = 3-oxosphinganine + CO2 + CoA. Its pathway is lipid metabolism; sphingolipid metabolism. In terms of biological role, serine palmitoyltransferase (SPT). The heterodimer formed with LCB2 constitutes the catalytic core. This Oryza sativa subsp. japonica (Rice) protein is Long chain base biosynthesis protein 1c.